We begin with the raw amino-acid sequence, 149 residues long: Placenta growth factor (149 aa).

Positions 1 to 18 are cleaved as a signal peptide; that stretch reads MPTVRLFTCFLQLLTGLV. Asn33 is a glycosylation site (N-linked (GlcNAc...) asparagine). Intrachain disulfides connect Cys52–Cys94, Cys83–Cys128, and Cys87–Cys130. Asn101 carries an N-linked (GlcNAc...) asparagine glycan.

This sequence belongs to the PDGF/VEGF growth factor family. As to quaternary structure, antiparallel homodimer; disulfide-linked. Also found as heterodimer with VEGFA/VEGF.

The protein localises to the secreted. Its function is as follows. Growth factor active in angiogenesis and endothelial cell growth, stimulating their proliferation and migration. It binds to the receptor FLT1/VEGFR-1. Also promotes cell tumor growth. The chain is Placenta growth factor (PGF) from Bos taurus (Bovine).